The primary structure comprises 479 residues: Endo-beta-1,6-galactanase (479 aa).

The N-terminal stretch at 1–20 is a signal peptide; that stretch reads MRSIVLPSLALALFSQRARA. N-linked (GlcNAc...) asparagine glycosylation is present at N89. The active-site Proton donor is the E210. The N-linked (GlcNAc...) asparagine glycan is linked to N271. E311 functions as the Nucleophile in the catalytic mechanism. N-linked (GlcNAc...) asparagine glycosylation occurs at N358.

It catalyses the reaction Endohydrolysis of (1-&gt;6)-beta-D-galactosidic linkages in arabinogalactan proteins and (1-&gt;3):(1-&gt;6)-beta-galactans to yield galactose and beta-(1-&gt;6)-galactaobiose as the final products.. Hydrolyzes galactooligomers with a degree of polymerization higher than 3. Hydrolyzes radish root arabinogalactan-protein. Does not hydrolyze dextran, arabinan, starch, laminarin, beta-1,4- and beta-1,3-galactans, larch wood arabinogalactan or acid-insoluble polygalacturonic acid. The protein is Endo-beta-1,6-galactanase of Hypocrea rufa (Trichoderma viride).